Consider the following 729-residue polypeptide: Phosphoribosylformylglycinamidine synthase subunit PurL (729 aa).

Residue histidine 42 is part of the active site. Tyrosine 45 and lysine 84 together coordinate ATP. Glutamate 86 is a Mg(2+) binding site. Substrate contacts are provided by residues 87 to 90 and arginine 109; that span reads SHNH. Residue histidine 88 is the Proton acceptor of the active site. Residue aspartate 110 coordinates Mg(2+). Glutamine 238 is a binding site for substrate. Aspartate 266 contacts Mg(2+). 310-312 serves as a coordination point for substrate; that stretch reads ESQ. 2 residues coordinate ATP: aspartate 492 and glycine 529. Mg(2+) is bound at residue asparagine 530. Residue serine 532 coordinates substrate.

This sequence belongs to the FGAMS family. In terms of assembly, monomer. Part of the FGAM synthase complex composed of 1 PurL, 1 PurQ and 2 PurS subunits.

The protein resides in the cytoplasm. It carries out the reaction N(2)-formyl-N(1)-(5-phospho-beta-D-ribosyl)glycinamide + L-glutamine + ATP + H2O = 2-formamido-N(1)-(5-O-phospho-beta-D-ribosyl)acetamidine + L-glutamate + ADP + phosphate + H(+). The protein operates within purine metabolism; IMP biosynthesis via de novo pathway; 5-amino-1-(5-phospho-D-ribosyl)imidazole from N(2)-formyl-N(1)-(5-phospho-D-ribosyl)glycinamide: step 1/2. In terms of biological role, part of the phosphoribosylformylglycinamidine synthase complex involved in the purines biosynthetic pathway. Catalyzes the ATP-dependent conversion of formylglycinamide ribonucleotide (FGAR) and glutamine to yield formylglycinamidine ribonucleotide (FGAM) and glutamate. The FGAM synthase complex is composed of three subunits. PurQ produces an ammonia molecule by converting glutamine to glutamate. PurL transfers the ammonia molecule to FGAR to form FGAM in an ATP-dependent manner. PurS interacts with PurQ and PurL and is thought to assist in the transfer of the ammonia molecule from PurQ to PurL. The protein is Phosphoribosylformylglycinamidine synthase subunit PurL of Campylobacter curvus (strain 525.92).